Here is a 327-residue protein sequence, read N- to C-terminus: MAAVLEVEIGGEAVREAAGEEMDLSELAPEERWRVEHARMHAKHRGHEAMHAEMVLILIATLVVAQLLLVQWKQRHQRSYNMVTLFQMWIVPVYFTVKLHWWRFLGIWIVFSIITAYITYKATRKPLLQTTPRLVYKWFLLLYKMSYATGIVGYIAVMFTLFGLNLLFRIKPEDAMDFGISLLFYGLYYGVLGRDFAELCADYMASTIGFYSASGMPTKHLSDSVCAVCGQQIFVDVNEEGIIENTYRLSCNHVFHEFCIRGWCIVGKKQTCPYCKEKVDLKRMFSNPWERPHVMYGQLLDWLRYLVAWQPVIIGLVQGINYCLGLE.

A run of 5 helical transmembrane segments spans residues 50–70 (MHAEMVLILIATLVVAQLLLV), 79–96 (SYNMVTLFQMWIVPVYFT), 99–119 (LHWWRFLGIWIVFSIITAYIT), 148–168 (ATGIVGYIAVMFTLFGLNLLF), and 173–193 (EDAMDFGISLLFYGLYYGVLG). The RING-type; atypical zinc finger occupies 226 to 276 (CAVCGQQIFVDVNEEGIIENTYRLSCNHVFHEFCIRGWCIVGKKQTCPYCK).

Belongs to the RNF121 family.

The protein localises to the endoplasmic reticulum membrane. It catalyses the reaction S-ubiquitinyl-[E2 ubiquitin-conjugating enzyme]-L-cysteine + [acceptor protein]-L-lysine = [E2 ubiquitin-conjugating enzyme]-L-cysteine + N(6)-ubiquitinyl-[acceptor protein]-L-lysine.. The protein operates within protein modification; protein ubiquitination. Its function is as follows. E3 ubiquitin ligase which accepts ubiquitin and transfers it to substrates thereby promoting their degradation by the endoplasmic reticulum-associated degradation (ERAD) pathway which is a pathway involved in ubiquitin-dependent degradation of misfolded endoplasmic reticulum proteins. May regulate the unfolded protein response to reduce endoplasmic reticulum stress. The chain is E3 ubiquitin ligase Rnf121 (rnf121) from Xenopus laevis (African clawed frog).